Here is a 360-residue protein sequence, read N- to C-terminus: 3-isopropylmalate dehydrogenase (360 aa).

An NAD(+)-binding site is contributed by 76–89 (GPKWDTIERDIRPE). Positions 96, 106, 134, and 224 each coordinate substrate. Mg(2+) contacts are provided by Asp224, Asp248, and Asp252. Residue 282–294 (GSAPDIAGKGIAN) participates in NAD(+) binding.

This sequence belongs to the isocitrate and isopropylmalate dehydrogenases family. LeuB type 1 subfamily. In terms of assembly, homodimer. Mg(2+) is required as a cofactor. The cofactor is Mn(2+).

The protein resides in the cytoplasm. It catalyses the reaction (2R,3S)-3-isopropylmalate + NAD(+) = 4-methyl-2-oxopentanoate + CO2 + NADH. Its pathway is amino-acid biosynthesis; L-leucine biosynthesis; L-leucine from 3-methyl-2-oxobutanoate: step 3/4. Functionally, catalyzes the oxidation of 3-carboxy-2-hydroxy-4-methylpentanoate (3-isopropylmalate) to 3-carboxy-4-methyl-2-oxopentanoate. The product decarboxylates to 4-methyl-2 oxopentanoate. The protein is 3-isopropylmalate dehydrogenase of Pseudomonas fluorescens (strain Pf0-1).